Here is a 158-residue protein sequence, read N- to C-terminus: Large ribosomal subunit protein uL13 (158 aa).

A disordered region spans residues 129–158; it reads PEHGHHAQKPVALDFGAMNNKNGRGNNAGR. Low complexity predominate over residues 144 to 158; the sequence is GAMNNKNGRGNNAGR.

The protein belongs to the universal ribosomal protein uL13 family. Part of the 50S ribosomal subunit.

This protein is one of the early assembly proteins of the 50S ribosomal subunit, although it is not seen to bind rRNA by itself. It is important during the early stages of 50S assembly. The chain is Large ribosomal subunit protein uL13 from Anaplasma phagocytophilum (strain HZ).